The following is a 40-amino-acid chain: Bacterioferritin heavy chain (40 aa).

Residues 1 to 40 (MRGNPEVIDYLNMLIGGELAARDQYLIHSRMYEDWGLTKY) enclose the Ferritin-like diiron domain. Glu18 contributes to the Fe cation binding site.

The protein belongs to the bacterioferritin family. As to quaternary structure, oligomer consisting of two types of subunits: light chain and heavy chain.

In terms of biological role, may perform analogous functions in iron detoxification and storage to that of animal ferritins. Contains approximately 750 iron atoms per molecule. This Absidia spinosa protein is Bacterioferritin heavy chain.